We begin with the raw amino-acid sequence, 639 residues long: MEIQSGPQPGSPGRAERLNARLLDEFVSLHGPTLRASGVPERLWGRLLHKLEHEVFDAGEMFGIMQVEEVEEAEDEAAREAQRKQPNPGGELCYKVIVTSESGVRADDPNSIFLIDHAWTCRVEHARKQLQQVPGLLHRMANLMGIEFHGEVPSPEVVALVLEEMWKFNQTYQLAHGTAEEKVPVWYIMDEFGSRIQHSDMPSFATAPFFYMPQQVAYTLLWPLRDLDTGEEVTRDFAYGEADPLIRKCMLLPWAPADMLDLSFSTPEPPAKYYQAILEENKEKLPLAISPVARPQGHVFRVHCDVQQVLGHLTHPRFTFTDSEADADIFFHFSHFKDYMKLSQESPQVLLNQFPCENLLTVKDCLASIARRAGGPEGPPWLPRTFNLRTELPQFVSYFQHRERRGEDNHWICKPWNLARSLDTHVTNNLHSIIRHRESTPKVVSKYIESPVLFLREDVGNVKFDIRYIVLLRSVRPLRLFAYDVFWLRFSNRPFALDDLDDYEKHFTVMNYDPDVVLKQVHYNEFIPQFEKQYPEFPWSDVQAEIFKAFTELFQVACAKPPPMGLCDYPSSRAMYAIDLMLNWDNHPDGKRVMQPQILEVNFNPDCERACRYHPSFFNDVFSTLFLDETDNCHVTRII.

The TTL domain occupies Pro-295 to Ile-639. Residues Ser-445 to Ile-448, Lys-463, and Asp-465 contribute to the ATP site.

Belongs to the tubulin--tyrosine ligase family. Interacts with MAVS; the interaction prevents MAVS binding to TBK1 and IKBKE. Interacts (via N-terminus) with TBK1 (via protein kinase domain). Interacts (via TTL domain) with IKBKE (via protein kinase domain). Interacts with tubulin alpha. Interacts with histone H3 and histone H4 (when trimethylated at 'Lys-20' (H4K20me3)). Interacts with CBX3. Widely expressed with highest levels in brain, kidney, liver, lung, muscle and testis.

The protein resides in the cytoplasm. The protein localises to the midbody. Its subcellular location is the cytoskeleton. It is found in the microtubule organizing center. It localises to the centrosome. The protein resides in the spindle. The protein localises to the nucleus. Functionally, negatively regulates post-translational modifications of tubulin, including detyrosination of the C-terminus and polyglutamylation of glutamate residues. Also, indirectly promotes histone H4 trimethylation at 'Lys-20' (H4K20me3). Probably by controlling tubulin and/or histone H4 post-translational modifications, plays a role in mitosis and in maintaining chromosome number stability. During RNA virus-mediated infection, acts as a negative regulator of the RIG-I pathway by preventing MAVS binding to TBK1 and IKBKE. The sequence is that of Tubulin--tyrosine ligase-like protein 12 from Mus musculus (Mouse).